The chain runs to 275 residues: Sulfate transporter CysZ (275 aa).

Residues 1–24 form a disordered region; sequence MSSEKSSFPEKPPSFEKPSHSNTA. The span at 13 to 24 shows a compositional bias: basic and acidic residues; sequence PSFEKPSHSNTA. The next 4 helical transmembrane spans lie at 49 to 69, 93 to 113, 169 to 189, and 232 to 252; these read FVIL…WWLF, LIWP…FSTI, IVLL…PVLW, and ALVS…PVAV.

It belongs to the CysZ family.

Its subcellular location is the cell inner membrane. Its function is as follows. High affinity, high specificity proton-dependent sulfate transporter, which mediates sulfate uptake. Provides the sulfur source for the cysteine synthesis pathway. The polypeptide is Sulfate transporter CysZ (Pectobacterium atrosepticum (strain SCRI 1043 / ATCC BAA-672) (Erwinia carotovora subsp. atroseptica)).